The following is a 153-amino-acid chain: Prostaglandin E synthase (153 aa).

Residues 1-13 are Lumenal-facing; the sequence is MTSLGLVMENSQV. The chain crosses the membrane as a helical span at residues 14 to 42; that stretch reads LPAFLLCSTLLVIKMYAVAVITGQVRLRK. Arginine 39 is a binding site for glutathione. Topologically, residues 43–61 are cytoplasmic; the sequence is KAFANPEDALKRGGLQYCR. A helical membrane pass occupies residues 62–91; that stretch reads SDPDVERCLRAHRNDMETIYPFLFLGFVYS. Residue 74–78 coordinates glutathione; that stretch reads RNDME. Topologically, residues 92 to 98 are lumenal; sequence FLGPNPL. A helical membrane pass occupies residues 99–120; that stretch reads IAWIHFLVVLTGRVVHTVAYLG. Glutathione is bound by residues histidine 114 and tyrosine 118. Topologically, residues 121-124 are cytoplasmic; sequence KMNP. Residues 125 to 153 traverse the membrane as a helical segment; that stretch reads RIRSGAYVLAQFACFSMALQILWEVAHHL. Residue 127 to 131 coordinates glutathione; sequence RSGAY.

The protein belongs to the MAPEG family. Glutathione serves as cofactor.

Its subcellular location is the membrane. The protein resides in the cytoplasm. It localises to the perinuclear region. It catalyses the reaction prostaglandin H2 = prostaglandin E2. The enzyme catalyses 2-glyceryl-prostaglandin H2 = 2-glyceryl-prostaglandin E2. It carries out the reaction prostaglandin G2 = (15S)-15-hydroperoxy-prostaglandin E2. The catalysed reaction is 1-chloro-2,4-dinitrobenzene + glutathione = 2,4-dinitrophenyl-S-glutathione + chloride + H(+). It catalyses the reaction (5S)-hydroperoxy-(6E,8Z,11Z,14Z)-eicosatetraenoate + 2 glutathione = (5S)-hydroxy-(6E,8Z,11Z,14Z)-eicosatetraenoate + glutathione disulfide + H2O. It participates in lipid metabolism; prostaglandin biosynthesis. Activity is increased following LPS stimulation and down-regulated by the anti-inflammatory glucocorticoid dexamethasone. In terms of biological role, terminal enzyme of the cyclooxygenase (COX)-2-mediated prostaglandin E2 (PGE2) biosynthetic pathway. Catalyzes the glutathione-dependent oxidoreduction of prostaglandin endoperoxide H2 (PGH2) to prostaglandin E2 (PGE2) in response to inflammatory stimuli. Plays a key role in inflammation response, fever and pain. Also catalyzes the oxidoreduction of endocannabinoids into prostaglandin glycerol esters and PGG2 into 15-hydroperoxy-PGE2. In addition, displays low glutathione transferase and glutathione-dependent peroxidase activities, toward 1-chloro-2,4-dinitrobenzene and 5-hydroperoxyicosatetraenoic acid (5-HPETE), respectively. The sequence is that of Prostaglandin E synthase (Ptges) from Rattus norvegicus (Rat).